The primary structure comprises 160 residues: Single-stranded DNA-binding protein 2 (160 aa).

Positions 2–104 (MNRVVLVGRL…VVAESVQFLE (103 aa)) constitute an SSB domain. A disordered region spans residues 107 to 160 (NNNVEGATSNNYQNKANYSNNNQTSSYRADTSQKSDSFASEGKPIDINEDDLPF). The span at 115–129 (SNNYQNKANYSNNNQ) shows a compositional bias: low complexity. Residues 130 to 144 (TSSYRADTSQKSDSF) are compositionally biased toward polar residues. Positions 155 to 160 (EDDLPF) match the Important for interaction with partner proteins motif.

As to quaternary structure, homotetramer.

In terms of biological role, plays an important role in DNA replication, recombination and repair. Binds to ssDNA and to an array of partner proteins to recruit them to their sites of action during DNA metabolism. The protein is Single-stranded DNA-binding protein 2 (ssb2) of Listeria monocytogenes serovar 1/2a (strain ATCC BAA-679 / EGD-e).